Reading from the N-terminus, the 147-residue chain is Small ribosomal subunit protein uS12 (147 aa).

It belongs to the universal ribosomal protein uS12 family. In terms of assembly, part of the 30S ribosomal subunit.

Its function is as follows. With S4 and S5 plays an important role in translational accuracy. Located at the interface of the 30S and 50S subunits. In Sulfolobus acidocaldarius (strain ATCC 33909 / DSM 639 / JCM 8929 / NBRC 15157 / NCIMB 11770), this protein is Small ribosomal subunit protein uS12.